Here is a 394-residue protein sequence, read N- to C-terminus: Probable purine permease 23 (394 aa).

Positions 1-20 (MEMTEASKHTTTHEESEHVQ) are enriched in basic and acidic residues. Positions 1–24 (MEMTEASKHTTTHEESEHVQNPEP) are disordered. Ser29 carries the phosphoserine modification. Helical transmembrane passes span 43–63 (ISVLICLFLVLLGDSLVILLL), 85–105 (WMQALIQNAAFPILIPLFFIF), 124–144 (LILLYFSLGVLVAAHSKLYAL), 152–172 (GFFMLISGSQLIFTLIFTAII), 180–200 (WIIISIVLILVSYAFGGPVFS), 211–231 (GIQAWLTFAASVAFALSLCLV), 254–274 (VLEMQICVSSVASVVCLVGLF), 301–321 (VGLALSWQVWAVGLIGLVLYV), 328–348 (IVHMCASPLMAFIVVLAFDFI), and 352–372 (FSWPRIGALIGSVLALGSYFY).

This sequence belongs to the purine permeases (TC 2.A.7.14) family.

The protein localises to the membrane. In Arabidopsis thaliana (Mouse-ear cress), this protein is Probable purine permease 23 (PUP23).